A 489-amino-acid polypeptide reads, in one-letter code: Dipeptide and tripeptide permease B (489 aa).

Residues 1–27 (MNKPASIGLLQQPKPFFMIFFVELWER) lie on the Cytoplasmic side of the membrane. A helical membrane pass occupies residues 28 to 48 (FGYYGVQGILAVYFVHKLGFS). Residues 49 to 52 (QEQA) are Periplasmic-facing. The chain crosses the membrane as a helical span at residues 53–73 (FTTFGAFAALVYGLIAIGGYV). At 74–82 (GDHLLGTKR) the chain is on the cytoplasmic side. The helical transmembrane segment at 83–103 (TIVLGAIVLTVGYFMTGLSIL) threads the bilayer. At 104 to 106 (KPE) the chain is on the periplasmic side. Residues 107 to 127 (LIFYALGTIAVGNGLFKANPA) form a helical membrane-spanning segment. Over 128 to 146 (SLLSKCYPPKDPRLDGAFT) the chain is Cytoplasmic. Residues 147–167 (LFYMSINIGSLFSLAIAPVIA) traverse the membrane as a helical segment. At 168-171 (EKFG) the chain is on the periplasmic side. A helical membrane pass occupies residues 172-192 (YAVTYNICGIGLIIALLVYVL). Residues 193–212 (YRNTVRNIGSEPDHRPINYK) are Cytoplasmic-facing. Transmembrane regions (helical) follow at residues 213-233 (NLLLVLAGTVTMVFVCAWLMH) and 234-254 (NVKIANIVLIGLSVVIVFIFF). Residues 255 to 267 (REAFKQDKVGRNK) lie on the Cytoplasmic side of the membrane. Residues 268-288 (MFVAFILMLQAIVFFILYAQM) traverse the membrane as a helical segment. The Periplasmic segment spans residues 289–311 (PTSLNFFAINNVHHQLLGFNINP). The chain crosses the membrane as a helical span at residues 312 to 332 (VSFQALNPFWIVVASPILAAL). Residues 333–350 (YTHWGSRSKDLTMPAKFT) are Cytoplasmic-facing. A helical transmembrane segment spans residues 351–371 (VGMFLCSLGFLTAAAAGLWFA). At 372 to 375 (DEQG) the chain is on the periplasmic side. A helical transmembrane segment spans residues 376–396 (LTSPWFIVLVYLFQSLGELMI). The Cytoplasmic segment spans residues 397–419 (SALGLAMVAALVPQYLMGFILGM). A helical transmembrane segment spans residues 420 to 440 (WYLTQATSFLLGGYVAAFTAI). Residues 441 to 456 (PEGITDPLETLPVYTN) are Periplasmic-facing. Residues 457–477 (VFGKIGITTFIVAIIMAITVP) traverse the membrane as a helical segment. Residues 478 to 489 (LLNRMMNGKQKA) are Cytoplasmic-facing.

It belongs to the major facilitator superfamily. Proton-dependent oligopeptide transporter (POT/PTR) (TC 2.A.17) family. DtpB subfamily.

Its subcellular location is the cell inner membrane. Functionally, proton-dependent permease that transports di- and tripeptides. The chain is Dipeptide and tripeptide permease B from Photorhabdus asymbiotica subsp. asymbiotica (strain ATCC 43949 / 3105-77) (Xenorhabdus luminescens (strain 2)).